The primary structure comprises 751 residues: Catalase-peroxidase (751 aa).

The interval 1–21 (MSNESKCPFHQTAGGGTTNRD) is disordered. The tryptophyl-tyrosyl-methioninium (Trp-Tyr) (with M-270) cross-link spans 90 to 244 (WHSAGTYRIG…LAAVQMGLIY (155 aa)). His-91 acts as the Proton acceptor in catalysis. Positions 195–227 (YGKDQVKAQPPGQGDLVAEPAKHGEEQNRDLSA) are disordered. Residues 214–227 (PAKHGEEQNRDLSA) are compositionally biased toward basic and acidic residues. The segment at residues 244 to 270 (YVNPEGPEGNPDPVASGKDIRETFGRM) is a cross-link (tryptophyl-tyrosyl-methioninium (Tyr-Met) (with W-90)). His-285 contacts heme b. The disordered stretch occupies residues 365–387 (AHQWRPKEGKGAGTVPDAHDPGK).

This sequence belongs to the peroxidase family. Peroxidase/catalase subfamily. As to quaternary structure, homodimer or homotetramer. Heme b serves as cofactor. Post-translationally, formation of the three residue Trp-Tyr-Met cross-link is important for the catalase, but not the peroxidase activity of the enzyme.

It carries out the reaction H2O2 + AH2 = A + 2 H2O. The catalysed reaction is 2 H2O2 = O2 + 2 H2O. Its function is as follows. Bifunctional enzyme with both catalase and broad-spectrum peroxidase activity. The polypeptide is Catalase-peroxidase (Pseudomonas putida (strain ATCC 700007 / DSM 6899 / JCM 31910 / BCRC 17059 / LMG 24140 / F1)).